Consider the following 346-residue polypeptide: Low specificity L-threonine aldolase (346 aa).

K207 bears the N6-(pyridoxal phosphate)lysine mark.

The protein belongs to the threonine aldolase family. In terms of assembly, homotetramer. Pyridoxal 5'-phosphate is required as a cofactor.

The enzyme catalyses L-threonine = acetaldehyde + glycine. It carries out the reaction L-allo-threonine = acetaldehyde + glycine. Catalyzes the cleavage of L-allo-threonine and L-threonine to glycine and acetaldehyde. Can also act on L-erythro-phenylserine, L-threo-phenylserine, L-beta-3,4-methylenedioxyphenylserine and L-beta-3,4-dihydroxyphenylserine. This chain is Low specificity L-threonine aldolase (ltaE), found in Pseudomonas sp. (strain NCIMB 10558).